Reading from the N-terminus, the 348-residue chain is Holliday junction branch migration complex subunit RuvB (348 aa).

The segment at 1-182 is large ATPase domain (RuvB-L); sequence MRIELLNTPA…FGINSRFDYY (182 aa). ATP contacts are provided by residues Ile21, Arg22, Gly63, Lys66, Thr67, Thr68, 129 to 131, Arg172, Tyr182, and Arg219; that span reads EDF. Residue Thr67 coordinates Mg(2+). The tract at residues 183–253 is small ATPAse domain (RuvB-S); it reads SADLLEKIII…IAMTTLDCLE (71 aa). Residues 256–348 form a head domain (RuvB-H) region; the sequence is EEGLDDMDKK…EFPLEDDQRQ (93 aa). The DNA site is built by Arg311 and Arg316.

The protein belongs to the RuvB family. In terms of assembly, homohexamer. Forms an RuvA(8)-RuvB(12)-Holliday junction (HJ) complex. HJ DNA is sandwiched between 2 RuvA tetramers; dsDNA enters through RuvA and exits via RuvB. An RuvB hexamer assembles on each DNA strand where it exits the tetramer. Each RuvB hexamer is contacted by two RuvA subunits (via domain III) on 2 adjacent RuvB subunits; this complex drives branch migration. In the full resolvosome a probable DNA-RuvA(4)-RuvB(12)-RuvC(2) complex forms which resolves the HJ.

It is found in the cytoplasm. It catalyses the reaction ATP + H2O = ADP + phosphate + H(+). Its function is as follows. The RuvA-RuvB-RuvC complex processes Holliday junction (HJ) DNA during genetic recombination and DNA repair, while the RuvA-RuvB complex plays an important role in the rescue of blocked DNA replication forks via replication fork reversal (RFR). RuvA specifically binds to HJ cruciform DNA, conferring on it an open structure. The RuvB hexamer acts as an ATP-dependent pump, pulling dsDNA into and through the RuvAB complex. RuvB forms 2 homohexamers on either side of HJ DNA bound by 1 or 2 RuvA tetramers; 4 subunits per hexamer contact DNA at a time. Coordinated motions by a converter formed by DNA-disengaged RuvB subunits stimulates ATP hydrolysis and nucleotide exchange. Immobilization of the converter enables RuvB to convert the ATP-contained energy into a lever motion, pulling 2 nucleotides of DNA out of the RuvA tetramer per ATP hydrolyzed, thus driving DNA branch migration. The RuvB motors rotate together with the DNA substrate, which together with the progressing nucleotide cycle form the mechanistic basis for DNA recombination by continuous HJ branch migration. Branch migration allows RuvC to scan DNA until it finds its consensus sequence, where it cleaves and resolves cruciform DNA. This is Holliday junction branch migration complex subunit RuvB from Chlorobium limicola (strain DSM 245 / NBRC 103803 / 6330).